The chain runs to 164 residues: Sec-independent protein translocase protein TatB (164 aa).

A helical transmembrane segment spans residues 1–21 (MIDIGLSKMALIGAVALIVIG). The disordered stretch occupies residues 81-102 (ASEFQKDWESGTSDAAATGHDG).

Belongs to the TatB family. In terms of assembly, the Tat system comprises two distinct complexes: a TatABC complex, containing multiple copies of TatA, TatB and TatC subunits, and a separate TatA complex, containing only TatA subunits. Substrates initially bind to the TatABC complex, which probably triggers association of the separate TatA complex to form the active translocon.

It localises to the cell inner membrane. Functionally, part of the twin-arginine translocation (Tat) system that transports large folded proteins containing a characteristic twin-arginine motif in their signal peptide across membranes. Together with TatC, TatB is part of a receptor directly interacting with Tat signal peptides. TatB may form an oligomeric binding site that transiently accommodates folded Tat precursor proteins before their translocation. The polypeptide is Sec-independent protein translocase protein TatB (Paracidovorax citrulli (strain AAC00-1) (Acidovorax citrulli)).